Here is a 378-residue protein sequence, read N- to C-terminus: S-(hydroxymethyl)glutathione dehydrogenase (378 aa).

Zn(2+)-binding residues include C49, H71, C101, C104, C107, C115, and C178.

It belongs to the zinc-containing alcohol dehydrogenase family. Class-III subfamily. In terms of assembly, homodimer. The cofactor is Zn(2+).

It is found in the cytoplasm. It carries out the reaction S-(hydroxymethyl)glutathione + NADP(+) = S-formylglutathione + NADPH + H(+). The enzyme catalyses S-(hydroxymethyl)glutathione + NAD(+) = S-formylglutathione + NADH + H(+). The catalysed reaction is a primary alcohol + NAD(+) = an aldehyde + NADH + H(+). It catalyses the reaction a secondary alcohol + NAD(+) = a ketone + NADH + H(+). It carries out the reaction S-nitrosoglutathione + NADH + H(+) = S-(hydroxysulfenamide)glutathione + NAD(+). Has high formaldehyde dehydrogenase activity in the presence of glutathione and catalyzes the oxidation of normal alcohols in a reaction that is not GSH-dependent. In addition, hemithiolacetals other than those formed from GSH, including omega-thiol fatty acids, also are substrates. Also acts as a S-nitroso-glutathione reductase by catalyzing the NADH-dependent reduction of S-nitrosoglutathione. This Haemophilus influenzae (strain ATCC 51907 / DSM 11121 / KW20 / Rd) protein is S-(hydroxymethyl)glutathione dehydrogenase (frmA).